Here is a 300-residue protein sequence, read N- to C-terminus: Cholesterol 25-hydroxylase-like protein (300 aa).

N-linked (GlcNAc...) asparagine glycosylation occurs at Asn-9. A run of 3 helical transmembrane segments spans residues 43-63, 95-115, and 130-152; these read LFPPFYALSIDYTWVAVFTFI, LQGWNQLLWIYPMALVQLIWV, and MVSQLAIFFLAFDFTYFWFHYFN. Residues 135–266 form the Fatty acid hydroxylase domain; that stretch reads AIFFLAFDFT…WFNYLDRLMG (132 aa). The short motif at 148–152 is the Histidine box-1 element; sequence FHYFN. The Histidine box-2 motif lies at 163–167; sequence HSVHH. A helical transmembrane segment spans residues 180–200; sequence LHPFELFFVATFITTVPWIFP. Residues 242 to 248 carry the Histidine box-3 motif; the sequence is AHDMHHL.

Belongs to the sterol desaturase family. Fe cation is required as a cofactor.

The protein resides in the membrane. Probable sterol desaturase. The polypeptide is Cholesterol 25-hydroxylase-like protein (Caenorhabditis briggsae).